We begin with the raw amino-acid sequence, 287 residues long: Elongation factor Ts (287 aa).

The involved in Mg(2+) ion dislocation from EF-Tu stretch occupies residues 80 to 83; it reads TDFL.

This sequence belongs to the EF-Ts family.

The protein localises to the cytoplasm. Its function is as follows. Associates with the EF-Tu.GDP complex and induces the exchange of GDP to GTP. It remains bound to the aminoacyl-tRNA.EF-Tu.GTP complex up to the GTP hydrolysis stage on the ribosome. The sequence is that of Elongation factor Ts from Stutzerimonas stutzeri (strain A1501) (Pseudomonas stutzeri).